We begin with the raw amino-acid sequence, 204 residues long: Protein DESIGUAL 4 (204 aa).

4 helical membrane-spanning segments follow: residues isoleucine 13 to phenylalanine 33, phenylalanine 60 to isoleucine 80, cysteine 107 to tryptophan 127, and valine 143 to isoleucine 163. Positions lysine 177–proline 204 are disordered. N-linked (GlcNAc...) asparagine glycosylation is present at asparagine 179.

It belongs to the DESIGUAL family. Only expressed in inflorescences.

It localises to the endoplasmic reticulum membrane. The protein is Protein DESIGUAL 4 of Arabidopsis thaliana (Mouse-ear cress).